The primary structure comprises 81 residues: Protein Vpu (81 aa).

Residues 1-7 (MSYLLAI) lie on the Extracellular side of the membrane. A helical membrane pass occupies residues 8-28 (GIAALIVALIIAIVVWTIVYI). The Cytoplasmic portion of the chain corresponds to 29–81 (EYKKLVRQRKINKLYKRIRERAEDSGNESEGDAEELAALGEMGPFIPGDINNL). Phosphoserine; by host CK2 occurs at positions 53 and 57.

The protein belongs to the HIV-1 VPU protein family. As to quaternary structure, homopentamer. Interacts with host CD4 and BRTC; these interactions induce proteasomal degradation of CD4. Interacts with host BST2; this interaction leads to the degradation of host BST2. Interacts with host FBXW11. Interacts with host AP1M1; this interaction plays a role in the mistrafficking and subsequent degradation of host BST2. Interacts with host RANBP2; this interaction allows Vpu to down-regulate host BLM sumoylation. Post-translationally, phosphorylated by host CK2. This phosphorylation is necessary for interaction with human BTRC and degradation of CD4.

Its subcellular location is the host membrane. Its activity is regulated as follows. Ion channel activity is inhibited by hexamethylene amiloride in vitro. In terms of biological role, enhances virion budding by targeting host CD4 and Tetherin/BST2 to proteasome degradation. Degradation of CD4 prevents any unwanted premature interactions between viral Env and its host receptor CD4 in the endoplasmic reticulum. Degradation of antiretroviral protein Tetherin/BST2 is important for virion budding, as BST2 tethers new viral particles to the host cell membrane. Mechanistically, Vpu bridges either CD4 or BST2 to BTRC, a substrate recognition subunit of the Skp1/Cullin/F-box protein E3 ubiquitin ligase, induces their ubiquitination and subsequent proteasomal degradation. The alteration of the E3 ligase specificity by Vpu seems to promote the degradation of host IKBKB, leading to NF-kappa-B down-regulation and subsequent apoptosis. Acts as a viroporin that forms an oligomeric ion channel in membranes. Modulates the host DNA repair mechanisms to promote degradation of nuclear viral cDNA in cells that are already productively infected in order to suppress immune sensing and proviral hyper-integration (superinfection). Manipulates PML-NBs and modulates SUMOylation of host BLM protein thereby enhancing its DNA-end processing activity toward viral unintegrated linear DNA. Also inhibits RAD52-mediated homologous repair of viral cDNA, preventing the generation of dead-end circular forms of single copies of the long terminal repeat and permitting sustained nucleolytic attack. The sequence is that of Protein Vpu from Homo sapiens (Human).